A 553-amino-acid chain; its full sequence is Probable malate:quinone oxidoreductase (553 aa).

A compositionally biased stretch (low complexity) spans Gln534–Pro543. Residues Gln534–Leu553 form a disordered region.

It belongs to the MQO family. The cofactor is FAD.

The enzyme catalyses (S)-malate + a quinone = a quinol + oxaloacetate. It participates in carbohydrate metabolism; tricarboxylic acid cycle; oxaloacetate from (S)-malate (quinone route): step 1/1. The chain is Probable malate:quinone oxidoreductase from Citrobacter koseri (strain ATCC BAA-895 / CDC 4225-83 / SGSC4696).